Reading from the N-terminus, the 893-residue chain is Alanine--tRNA ligase (893 aa).

Residues His-573, His-577, Cys-676, and His-680 each coordinate Zn(2+). Residues 853-872 form a disordered region; that stretch reads LGGGGGGKDDLAQGGGQDPS.

The protein belongs to the class-II aminoacyl-tRNA synthetase family. Requires Zn(2+) as cofactor.

It localises to the cytoplasm. The catalysed reaction is tRNA(Ala) + L-alanine + ATP = L-alanyl-tRNA(Ala) + AMP + diphosphate. Functionally, catalyzes the attachment of alanine to tRNA(Ala) in a two-step reaction: alanine is first activated by ATP to form Ala-AMP and then transferred to the acceptor end of tRNA(Ala). Also edits incorrectly charged Ser-tRNA(Ala) and Gly-tRNA(Ala) via its editing domain. This is Alanine--tRNA ligase from Kineococcus radiotolerans (strain ATCC BAA-149 / DSM 14245 / SRS30216).